Here is a 268-residue protein sequence, read N- to C-terminus: Type II methyltransferase M2.DpnII (268 aa).

This sequence belongs to the N(4)/N(6)-methyltransferase family. In terms of assembly, homodimer.

The catalysed reaction is a 2'-deoxyadenosine in DNA + S-adenosyl-L-methionine = an N(6)-methyl-2'-deoxyadenosine in DNA + S-adenosyl-L-homocysteine + H(+). A beta subtype methylase that recognizes the single- or double-stranded sequence 5'-GATC-3', methylates A-2 on one or both strands (respectively), and protects the DNA from cleavage by the DpnII endonuclease. Further methylates DNA that is already methylated at 5'-GATC-3' sites. Essential for establishment of a previously unmethylated plasmid transformed into the cell as single-stranded DNA, enhances plasmid transfer to DpnII-containing strains of Streptococcus pneumoniae. The protein is Type II methyltransferase M2.DpnII of Streptococcus pneumoniae.